Consider the following 162-residue polypeptide: Transcription elongation factor GreA (162 aa).

Residues Glu-45–Glu-74 are a coiled coil.

This sequence belongs to the GreA/GreB family.

Necessary for efficient RNA polymerase transcription elongation past template-encoded arresting sites. The arresting sites in DNA have the property of trapping a certain fraction of elongating RNA polymerases that pass through, resulting in locked ternary complexes. Cleavage of the nascent transcript by cleavage factors such as GreA or GreB allows the resumption of elongation from the new 3'terminus. GreA releases sequences of 2 to 3 nucleotides. This chain is Transcription elongation factor GreA, found in Rickettsia prowazekii (strain Madrid E).